The following is a 504-amino-acid chain: Glucose-6-phosphate isomerase (504 aa).

Residue glutamate 333 is the Proton donor of the active site. Active-site residues include histidine 364 and lysine 473.

The protein belongs to the GPI family.

It localises to the cytoplasm. The enzyme catalyses alpha-D-glucose 6-phosphate = beta-D-fructose 6-phosphate. It functions in the pathway carbohydrate biosynthesis; gluconeogenesis. The protein operates within carbohydrate degradation; glycolysis; D-glyceraldehyde 3-phosphate and glycerone phosphate from D-glucose: step 2/4. Its function is as follows. Catalyzes the reversible isomerization of glucose-6-phosphate to fructose-6-phosphate. This Xanthomonas campestris pv. campestris (strain B100) protein is Glucose-6-phosphate isomerase.